The following is a 340-amino-acid chain: Sulfotransferase ppzF (340 aa).

It functions in the pathway secondary metabolite biosynthesis. Functionally, sulfotransferase; part of the gene cluster that mediates the biosynthesis of pyrrolopyrazines, secondary metabolites showing insecticidal activity. The role of ppzF within the pathway has still to be determined. The single multifunctional NRPS ppzA is sufficient to produce peramine via condensation of 1-pyrroline-5-carboxylate and arginine, N-methylation of the alpha-amino group of arginine and reduction of the thioester and the cyclization to form an iminium ion resulting in release from the peptide synthetase. Deprotonation of this intermediate and oxidation of the pyrroline ring would give rise to peramine. In Epichloe species that produce only peramine, the peramine synthetase gene is not localized in a gene cluster, in contrast to Metarhizium species that contain additional pyrrolopyrazine biosynthesis genes. The 2-oxoglutarate-Fe(II) type oxidoreductase ppzC hydroxylates peramine to yield the newly identified compound 8-hydroxyperamine whereas ppzD converts L-proline into trans-4-hydroxy-L-proline, a precursor of peramine biosynthesis. The sequence is that of Sulfotransferase ppzF from Metarhizium rileyi (strain RCEF 4871) (Nomuraea rileyi).